The chain runs to 256 residues: 1-(5-phosphoribosyl)-5-[(5-phosphoribosylamino)methylideneamino] imidazole-4-carboxamide isomerase (256 aa).

D8 functions as the Proton acceptor in the catalytic mechanism. D129 serves as the catalytic Proton donor.

Belongs to the HisA/HisF family.

The protein localises to the cytoplasm. The enzyme catalyses 1-(5-phospho-beta-D-ribosyl)-5-[(5-phospho-beta-D-ribosylamino)methylideneamino]imidazole-4-carboxamide = 5-[(5-phospho-1-deoxy-D-ribulos-1-ylimino)methylamino]-1-(5-phospho-beta-D-ribosyl)imidazole-4-carboxamide. Its pathway is amino-acid biosynthesis; L-histidine biosynthesis; L-histidine from 5-phospho-alpha-D-ribose 1-diphosphate: step 4/9. The protein is 1-(5-phosphoribosyl)-5-[(5-phosphoribosylamino)methylideneamino] imidazole-4-carboxamide isomerase of Synechococcus sp. (strain CC9311).